Consider the following 274-residue polypeptide: 3-deoxy-manno-octulosonate cytidylyltransferase (274 aa).

Belongs to the KdsB family.

Its subcellular location is the cytoplasm. It carries out the reaction 3-deoxy-alpha-D-manno-oct-2-ulosonate + CTP = CMP-3-deoxy-beta-D-manno-octulosonate + diphosphate. It functions in the pathway nucleotide-sugar biosynthesis; CMP-3-deoxy-D-manno-octulosonate biosynthesis; CMP-3-deoxy-D-manno-octulosonate from 3-deoxy-D-manno-octulosonate and CTP: step 1/1. The protein operates within bacterial outer membrane biogenesis; lipopolysaccharide biosynthesis. In terms of biological role, activates KDO (a required 8-carbon sugar) for incorporation into bacterial lipopolysaccharide in Gram-negative bacteria. The protein is 3-deoxy-manno-octulosonate cytidylyltransferase of Bordetella avium (strain 197N).